Here is a 264-residue protein sequence, read N- to C-terminus: Splicing factor U2af 38 kDa subunit (264 aa).

The segment at 12-40 (EKDKVNCSFYFKIGACRHGDRCSRIHNKP) adopts a C3H1-type 1 zinc-finger fold. The residue at position 19 (Ser-19) is a Phosphoserine. The 106-residue stretch at 44–149 (QTVLLQNLYV…RPVYSELSPV (106 aa)) folds into the RRM domain. Residues 151–178 (DFREACCRQYEMGECTRSGFCNFMHLKP) form a C3H1-type 2 zinc finger. The segment covering 190 to 219 (RRRRARSRSRSPGRRRGSRSRSRSPGRRGG) has biased composition (basic residues). The disordered stretch occupies residues 190–264 (RRRRARSRSR…GGGGGGGGRY (75 aa)). The span at 233–251 (NERDNMRGNDRGNDRDRRK) shows a compositional bias: basic and acidic residues. Residues 253 to 264 (GGGGGGGGGGRY) show a composition bias toward gly residues.

The protein belongs to the splicing factor SR family. In terms of assembly, associates with a 65 kDa protein.

The protein resides in the nucleus. Functionally, necessary for the splicing of pre-mRNA. Binds to the polypyrimidine tract of introns early during spliceosome assembly. In Drosophila melanogaster (Fruit fly), this protein is Splicing factor U2af 38 kDa subunit (U2af38).